The sequence spans 320 residues: Ferrochelatase (320 aa).

Residues His-194 and Glu-275 each contribute to the Fe cation site.

This sequence belongs to the ferrochelatase family.

It localises to the cytoplasm. The enzyme catalyses heme b + 2 H(+) = protoporphyrin IX + Fe(2+). The protein operates within porphyrin-containing compound metabolism; protoheme biosynthesis; protoheme from protoporphyrin-IX: step 1/1. Its function is as follows. Catalyzes the ferrous insertion into protoporphyrin IX. In Xylella fastidiosa (strain M23), this protein is Ferrochelatase.